The primary structure comprises 474 residues: DNA damage checkpoint control protein MEC3 (474 aa).

Phosphoserine is present on Ser-452.

It belongs to the MEC3 family. Component of the checkpoint clamp complex composed of DDC1, MEC3 and RAD17. The interaction with MEC3 is performed in a RAD17-dependent manner. The checkpoint clamp complex loads onto DNA. Interacts with the DNA polymerase zeta subunit REV7. Also forms a heterotrimer with 2 RAD17 subunits. Interacts with SET1.

The protein localises to the nucleus. Its function is as follows. Component of the checkpoint clamp complex involved in the surveillance mechanism that allows the DNA repair pathways to act to restore the integrity of the DNA prior to DNA synthesis or separation of the replicated chromosomes. Associates with sites of DNA damage and modulates the MEC1 signaling pathway and the activation of RAD53 in response to DNA damage at phase G1. The complex also physically regulates DNA polymerase zeta-dependent mutagenesis by controlling the access of polymerase zeta to damaged DNA. This is DNA damage checkpoint control protein MEC3 (MEC3) from Saccharomyces cerevisiae (strain ATCC 204508 / S288c) (Baker's yeast).